The chain runs to 144 residues: Large ribosomal subunit protein uL15 (144 aa).

The segment at 1-48 (MQLNNLKPADGSKHAKRRVGRGIGSGLGKTAGRGHKGQKSRSGGFHKV) is disordered. The span at 21-31 (RGIGSGLGKTA) shows a compositional bias: gly residues.

This sequence belongs to the universal ribosomal protein uL15 family. In terms of assembly, part of the 50S ribosomal subunit.

Its function is as follows. Binds to the 23S rRNA. The sequence is that of Large ribosomal subunit protein uL15 from Cupriavidus metallidurans (strain ATCC 43123 / DSM 2839 / NBRC 102507 / CH34) (Ralstonia metallidurans).